We begin with the raw amino-acid sequence, 333 residues long: Phosphate acyltransferase (333 aa).

The protein belongs to the PlsX family. In terms of assembly, homodimer. Probably interacts with PlsY.

The protein localises to the cytoplasm. The catalysed reaction is a fatty acyl-[ACP] + phosphate = an acyl phosphate + holo-[ACP]. The protein operates within lipid metabolism; phospholipid metabolism. Its function is as follows. Catalyzes the reversible formation of acyl-phosphate (acyl-PO(4)) from acyl-[acyl-carrier-protein] (acyl-ACP). This enzyme utilizes acyl-ACP as fatty acyl donor, but not acyl-CoA. This chain is Phosphate acyltransferase, found in Cellvibrio japonicus (strain Ueda107) (Pseudomonas fluorescens subsp. cellulosa).